Consider the following 493-residue polypeptide: Dipeptide permease D (493 aa).

Topologically, residues 1–13 (MNKHASQPRAIYY) are cytoplasmic. The helical transmembrane segment at 14-34 (VVALQIWEYFSFYGMRALLIL) threads the bilayer. Over 35–48 (YLTNQLKYNDTHAY) the chain is Periplasmic. The helical transmembrane segment at 49–69 (ELFSAYCSLVYVTPILGGFLA) threads the bilayer. Topologically, residues 70–77 (DKVLGNRM) are cytoplasmic. A helical membrane pass occupies residues 78–98 (AVMLGALLMAIGHVVLGASEI). At 99–100 (HP) the chain is on the periplasmic side. A helical membrane pass occupies residues 101–121 (SFLYLSLAIIVCGYGLFKSNV). Over 122 to 137 (SCLLGELYEPTDPRRD) the chain is Cytoplasmic. A helical membrane pass occupies residues 138 to 158 (GGFSLMYAAGNVGSIIAPIAC). Residues 159–166 (GYAQEEYS) are Periplasmic-facing. The helical transmembrane segment at 167–187 (WAMGFGLAAVGMIAGLVIFLC) threads the bilayer. Residues 188–211 (GNRHFTHTRGVNKKVLRATNFLLP) are Cytoplasmic-facing. The chain crosses the membrane as a helical span at residues 212 to 232 (NWGWLLVLLVATPALITILFW). Residues 233–234 (KE) lie on the Periplasmic side of the membrane. A helical transmembrane segment spans residues 235–255 (WSVYALIVATIIGLGVLAKIY). The Cytoplasmic portion of the chain corresponds to 256–266 (RKAENQKQRKE). A helical transmembrane segment spans residues 267–287 (LGLIVTLTFFSMLFWAFAQQG). Residues 288–311 (GSSISLYIDRFVNRDMFGYTVPTA) are Periplasmic-facing. A helical transmembrane segment spans residues 312–332 (MFQSINAFAVMLCGVFLAWVV). Residues 333–343 (KESVAGNRTVR) are Cytoplasmic-facing. Residues 344-364 (IWGKFALGLGLMSAGFCILTL) form a helical membrane-spanning segment. Residues 365 to 378 (SARWSAMYGHSSLP) lie on the Periplasmic side of the membrane. Residues 379 to 399 (LMVLGLAVMGFAELFIDPVAM) form a helical membrane-spanning segment. Topologically, residues 400 to 412 (SQITRIEIPGVTG) are cytoplasmic. The chain crosses the membrane as a helical span at residues 413–433 (VLTGIYMLLSGAIANYLAGVI). Topologically, residues 434-461 (ADQTSQASFDASGAINYSINAYIEVFDQ) are periplasmic. A helical membrane pass occupies residues 462 to 482 (ITWGALACVGLVLMIWLYQAL). The Cytoplasmic segment spans residues 483-493 (KFRNRALALES).

It belongs to the major facilitator superfamily. Proton-dependent oligopeptide transporter (POT/PTR) (TC 2.A.17) family. DtpD subfamily.

The protein resides in the cell inner membrane. Probable proton-dependent permease that transports dipeptides. The protein is Dipeptide permease D (dtpD) of Escherichia coli (strain K12).